Consider the following 389-residue polypeptide: MVSVSEIRKAQRAEGPATILAIGTANPANRVEQATYPDFYFKITNSEHKVELKEKFQRMCDKSMIKSRYMYLTEEILKENPSVCEYMAPSLDARQDMVVVEVPRLGKEAAVKAIKEWGQPKSKITHLIFCTTSGVDMPGADYQLTKLLGLRPYVKRYMMYQQGCFAGGTVLRLAKDLAENNKGARVLVVCSEVTAVTFRGPSDTHLDSLVGQALFGDGAAALIVGSDPVPEIEKPIFEMVWTAQTIAPDSEGAIDGHLREAGLTFHLLKDVPGIVSKNIDKALVEAFQPLNISDYNSIFWIAHPGGPAILDQVEQKLALKPEKMKATREVLSEYGNMSSACVLFILDEMRKKSAQNGLKTTGEGLEWGVLFGFGPGLTIETVVLHSVAI.

Residue cysteine 164 is part of the active site.

The protein belongs to the thiolase-like superfamily. Chalcone/stilbene synthases family.

The catalysed reaction is (E)-4-coumaroyl-CoA + 3 malonyl-CoA + 3 H(+) = 2',4,4',6'-tetrahydroxychalcone + 3 CO2 + 4 CoA. It participates in secondary metabolite biosynthesis; flavonoid biosynthesis. Functionally, the primary product of this enzyme is 4,2',4',6'-tetrahydroxychalcone (also termed naringenin-chalcone or chalcone) which can under specific conditions spontaneously isomerize into naringenin. This Trifolium subterraneum (Subterranean clover) protein is Chalcone synthase 2 (CHS2).